A 136-amino-acid chain; its full sequence is General odorant-binding protein 57d (136 aa).

Residues 1 to 29 (MPEKMSLRLVPHLACIIFILEIQFRIADS) form the signal peptide. 3 disulfide bridges follow: cysteine 33–cysteine 70, cysteine 66–cysteine 118, and cysteine 107–cysteine 127.

This sequence belongs to the PBP/GOBP family.

In terms of biological role, present in the aqueous fluid surrounding olfactory sensory dendrites and are thought to aid in the capture and transport of hydrophobic odorants into and through this fluid. In Drosophila melanogaster (Fruit fly), this protein is General odorant-binding protein 57d.